The primary structure comprises 160 residues: MKTKMITREGYNKLKQELDYLWKEHRPEITQKVSWAASLGDRSENADYTYNKRLLRQIDRRVRFLSKFLPEVKIVDYAPQQEGKVFFGAWVEIENEAGEVMKFRIVGPEEIYGDAKGYISIDSPMARALLKKEVDDEVQVPTPSGIKEWFINSIEYDKGQ.

It belongs to the GreA/GreB family. GreB subfamily.

Functionally, necessary for efficient RNA polymerase transcription elongation past template-encoded arresting sites. The arresting sites in DNA have the property of trapping a certain fraction of elongating RNA polymerases that pass through, resulting in locked ternary complexes. Cleavage of the nascent transcript by cleavage factors such as GreA or GreB allows the resumption of elongation from the new 3'terminus. GreB releases sequences of up to 9 nucleotides in length. This chain is Transcription elongation factor GreB, found in Vibrio vulnificus (strain YJ016).